A 100-amino-acid chain; its full sequence is Urease subunit gamma (100 aa).

It belongs to the urease gamma subunit family. As to quaternary structure, heterotrimer of UreA (gamma), UreB (beta) and UreC (alpha) subunits. Three heterotrimers associate to form the active enzyme.

It is found in the cytoplasm. It carries out the reaction urea + 2 H2O + H(+) = hydrogencarbonate + 2 NH4(+). It functions in the pathway nitrogen metabolism; urea degradation; CO(2) and NH(3) from urea (urease route): step 1/1. This chain is Urease subunit gamma, found in Cereibacter sphaeroides (strain ATCC 17029 / ATH 2.4.9) (Rhodobacter sphaeroides).